Reading from the N-terminus, the 78-residue chain is Large ribosomal subunit protein bL28 (78 aa).

Residues 1–22 (MSKVCQVTGKRPTTGNNVSHAN) are disordered. Over residues 11 to 22 (RPTTGNNVSHAN) the composition is skewed to polar residues.

Belongs to the bacterial ribosomal protein bL28 family.

This chain is Large ribosomal subunit protein bL28, found in Alkalilimnicola ehrlichii (strain ATCC BAA-1101 / DSM 17681 / MLHE-1).